Here is a 149-residue protein sequence, read N- to C-terminus: Large ribosomal subunit protein uL22c (149 aa).

It belongs to the universal ribosomal protein uL22 family. Part of the 50S ribosomal subunit.

It localises to the plastid. Its subcellular location is the chloroplast. This protein binds specifically to 23S rRNA. Its function is as follows. The globular domain of the protein is located near the polypeptide exit tunnel on the outside of the subunit, while an extended beta-hairpin is found that lines the wall of the exit tunnel in the center of the 70S ribosome. In Hordeum vulgare (Barley), this protein is Large ribosomal subunit protein uL22c (rpl22).